A 412-amino-acid polypeptide reads, in one-letter code: 8-amino-7-oxononanoate synthase (412 aa).

Arg28 is a substrate binding site. Residue 115–116 (GY) participates in pyridoxal 5'-phosphate binding. His140 provides a ligand contact to substrate. Pyridoxal 5'-phosphate contacts are provided by Ser186, His214, and Thr246. Position 249 is an N6-(pyridoxal phosphate)lysine (Lys249). Thr367 serves as a coordination point for substrate.

This sequence belongs to the class-II pyridoxal-phosphate-dependent aminotransferase family. BioF subfamily. Homodimer. The cofactor is pyridoxal 5'-phosphate.

It catalyses the reaction 6-carboxyhexanoyl-[ACP] + L-alanine + H(+) = (8S)-8-amino-7-oxononanoate + holo-[ACP] + CO2. Its pathway is cofactor biosynthesis; biotin biosynthesis. In terms of biological role, catalyzes the decarboxylative condensation of pimeloyl-[acyl-carrier protein] and L-alanine to produce 8-amino-7-oxononanoate (AON), [acyl-carrier protein], and carbon dioxide. The chain is 8-amino-7-oxononanoate synthase from Paracidovorax citrulli (strain AAC00-1) (Acidovorax citrulli).